The chain runs to 640 residues: Choline O-acetyltransferase (640 aa).

A compositionally biased stretch (basic and acidic residues) spans methionine 1–alanine 22. The disordered stretch occupies residues methionine 1–valine 28. The active-site Proton acceptor is the histidine 334. CoA contacts are provided by residues glycine 412–aspartate 424, serine 450, and glutamine 551.

The protein belongs to the carnitine/choline acetyltransferase family. In terms of tissue distribution, detected in brain and in embryonic retina.

The catalysed reaction is choline + acetyl-CoA = acetylcholine + CoA. In terms of biological role, catalyzes the reversible synthesis of acetylcholine (ACh) from acetyl CoA and choline at cholinergic synapses. This chain is Choline O-acetyltransferase (CHAT), found in Gallus gallus (Chicken).